We begin with the raw amino-acid sequence, 162 residues long: Phosphopantetheine adenylyltransferase (162 aa).

Residue Ser-9 coordinates substrate. ATP-binding positions include Ser-9–Phe-10 and His-17. Substrate-binding residues include Lys-41, Ile-77, and Lys-91. Residues Gly-92–Arg-94, Glu-102, and Tyr-126–Ser-132 each bind ATP.

It belongs to the bacterial CoaD family. Homohexamer. Requires Mg(2+) as cofactor.

The protein resides in the cytoplasm. It catalyses the reaction (R)-4'-phosphopantetheine + ATP + H(+) = 3'-dephospho-CoA + diphosphate. The protein operates within cofactor biosynthesis; coenzyme A biosynthesis; CoA from (R)-pantothenate: step 4/5. In terms of biological role, reversibly transfers an adenylyl group from ATP to 4'-phosphopantetheine, yielding dephospho-CoA (dPCoA) and pyrophosphate. The chain is Phosphopantetheine adenylyltransferase from Frankia casuarinae (strain DSM 45818 / CECT 9043 / HFP020203 / CcI3).